The primary structure comprises 208 residues: Photosystem I reaction center subunit II-1, chloroplastic (208 aa).

The transit peptide at 1–45 (MATQAAGIFNSAITTAATSGVKKLHFFSTTHRPKSLSFTKTAIRA) directs the protein to the chloroplast. Threonine 48 carries the post-translational modification Phosphothreonine. Residues 49–72 (DSSAAAAAAPATKEAPVGFTPPQL) are disordered. The span at 50–64 (SSAAAAAAPATKEAP) shows a compositional bias: low complexity. The interval 141 to 149 (RLRSKYKIT) is ferredoxin and ferredoxin-oxidoreductase binding.

The protein belongs to the PsaD family. As to quaternary structure, interacts with PGRL1A and PGRL1B. Phosphorylated by a threonine specific thylakoid kinase in a light activated and redox-dependent manner.

Its subcellular location is the plastid. The protein resides in the chloroplast thylakoid membrane. Its function is as follows. PsaD can form complexes with ferredoxin and ferredoxin-oxidoreductase in photosystem I (PS I) reaction center. PSAD may encode the ferredoxin-docking protein. This Arabidopsis thaliana (Mouse-ear cress) protein is Photosystem I reaction center subunit II-1, chloroplastic (psaD1).